A 581-amino-acid polypeptide reads, in one-letter code: Proline--tRNA ligase (581 aa).

Belongs to the class-II aminoacyl-tRNA synthetase family. ProS type 1 subfamily. As to quaternary structure, homodimer.

The protein resides in the cytoplasm. The enzyme catalyses tRNA(Pro) + L-proline + ATP = L-prolyl-tRNA(Pro) + AMP + diphosphate. In terms of biological role, catalyzes the attachment of proline to tRNA(Pro) in a two-step reaction: proline is first activated by ATP to form Pro-AMP and then transferred to the acceptor end of tRNA(Pro). As ProRS can inadvertently accommodate and process non-cognate amino acids such as alanine and cysteine, to avoid such errors it has two additional distinct editing activities against alanine. One activity is designated as 'pretransfer' editing and involves the tRNA(Pro)-independent hydrolysis of activated Ala-AMP. The other activity is designated 'posttransfer' editing and involves deacylation of mischarged Ala-tRNA(Pro). The misacylated Cys-tRNA(Pro) is not edited by ProRS. In Delftia acidovorans (strain DSM 14801 / SPH-1), this protein is Proline--tRNA ligase.